We begin with the raw amino-acid sequence, 504 residues long: Maturase K (504 aa).

The protein belongs to the intron maturase 2 family. MatK subfamily.

The protein resides in the plastid. Its subcellular location is the chloroplast. In terms of biological role, usually encoded in the trnK tRNA gene intron. Probably assists in splicing its own and other chloroplast group II introns. The protein is Maturase K of Chimaphila umbellata (Pipsissewa).